Reading from the N-terminus, the 192-residue chain is Nucleoside triphosphate pyrophosphatase (192 aa).

The active-site Proton acceptor is Asp73.

It belongs to the Maf family. The cofactor is a divalent metal cation.

It localises to the cytoplasm. The catalysed reaction is a ribonucleoside 5'-triphosphate + H2O = a ribonucleoside 5'-phosphate + diphosphate + H(+). It catalyses the reaction a 2'-deoxyribonucleoside 5'-triphosphate + H2O = a 2'-deoxyribonucleoside 5'-phosphate + diphosphate + H(+). Nucleoside triphosphate pyrophosphatase. May have a dual role in cell division arrest and in preventing the incorporation of modified nucleotides into cellular nucleic acids. The chain is Nucleoside triphosphate pyrophosphatase from Ehrlichia ruminantium (strain Welgevonden).